A 135-amino-acid polypeptide reads, in one-letter code: Cytochrome b5, seed isoform (135 aa).

The region spanning 5–81 (SKVFTLAEVS…LDEYYVGDID (77 aa)) is the Cytochrome b5 heme-binding domain. His-40 and His-64 together coordinate heme. Residues 107–127 (FIVKLLQFLVPLIILGVAFGV) traverse the membrane as a helical segment.

This sequence belongs to the cytochrome b5 family. In terms of tissue distribution, specifically expressed in developing seeds.

It localises to the endoplasmic reticulum membrane. It is found in the microsome membrane. Its function is as follows. Cytochrome b5 is a membrane bound hemoprotein which function as an electron carrier for several membrane bound oxygenases. May play a key role in the modification by desaturation of fatty acids in the endoplasmic reticulum, which in the developing seed is utilized for membrane synthesis and in the developmentally regulated production of large amounts of storage lipids. In Nicotiana tabacum (Common tobacco), this protein is Cytochrome b5, seed isoform.